Here is a 156-residue protein sequence, read N- to C-terminus: Crossover junction endodeoxyribonuclease RuvC (156 aa).

Active-site residues include aspartate 7, glutamate 66, and aspartate 138. Mg(2+)-binding residues include aspartate 7, glutamate 66, and aspartate 138.

Belongs to the RuvC family. In terms of assembly, homodimer which binds Holliday junction (HJ) DNA. The HJ becomes 2-fold symmetrical on binding to RuvC with unstacked arms; it has a different conformation from HJ DNA in complex with RuvA. In the full resolvosome a probable DNA-RuvA(4)-RuvB(12)-RuvC(2) complex forms which resolves the HJ. Mg(2+) is required as a cofactor.

The protein resides in the cytoplasm. The catalysed reaction is Endonucleolytic cleavage at a junction such as a reciprocal single-stranded crossover between two homologous DNA duplexes (Holliday junction).. Its function is as follows. The RuvA-RuvB-RuvC complex processes Holliday junction (HJ) DNA during genetic recombination and DNA repair. Endonuclease that resolves HJ intermediates. Cleaves cruciform DNA by making single-stranded nicks across the HJ at symmetrical positions within the homologous arms, yielding a 5'-phosphate and a 3'-hydroxyl group; requires a central core of homology in the junction. The consensus cleavage sequence is 5'-(A/T)TT(C/G)-3'. Cleavage occurs on the 3'-side of the TT dinucleotide at the point of strand exchange. HJ branch migration catalyzed by RuvA-RuvB allows RuvC to scan DNA until it finds its consensus sequence, where it cleaves and resolves the cruciform DNA. This chain is Crossover junction endodeoxyribonuclease RuvC, found in Ehrlichia canis (strain Jake).